The chain runs to 970 residues: MANFLQDVNCETVSEYDGPDASIPEGVWEGYVGHDHAALWRTWSYIYECCKKGTLVQFRGGKLVTFSMFDNPRFSNGAGIDAQKVLDLEDRARELQGYGPVNRRTDVMPVDRWTLNGPLLRYDKMVLEDVGGTGSNRTMVRAQLEALQDERDVPDCDFILNVRDYPLLRRDGTRPYPQVYGKGRRLPEPWARGGPHVPVVSMCSGPTYADIAVPTYECIAHAYTSSGRTLPAGGRFVKTPSADSLPAWRDRKALAVFRGSSTGAGTSTEDNQRLRALQISMSRPDLADVGITKWNLRPRKTERYDGYRIIEPWQFGRKSPYPAAAKPMTPEQIAGYKYVLCLWGHAPAFRLARDLSLGSVVLLPSRPPGQEGLDMWHSSVLKPWTHYIPVRGDLSDLEKRIEWCRDNDAECEKIAAAGMEASLNLLGWEGQLDRWMDVLRSVRLECCPGGYDMPPSPSLVSDSMCVRQMVSFPRYEDIPQPSSPMPVLPRCSGTLRGWGLAASLGWDLGDAAEVLNVKRSTAVLSKTVFNNLIYRTPHLRYTFGVAASDPESTAAVILSEKLKGAVTMRSWLEDSRAWARGRNVASVLCQVSQALLEAQAAAGTVFGDLSLDTILVVPNPLPEYIYHDGTGGSFGLKLMPGDKWAVVTYGDYTRARIRVLKGDGRKGHLAVVGPQPVYTKLSERKWHDICCLVSCILRTARTSKRPAARALAAAVARAAGVKRPDMDAEALEATPYEAREEPLTRFGPAEFINGLVREFKLEEGGWAWTEKNKNIEKVLRPWERGLPLYPVRLWLSGDRKEAMRACVSSVLKAAPPRPATAAGAHHTFQTYLRTVGADLDSFPEWAAAAAHLKRLWKSPGSLPAGSASLRAPSVPPPCHGPAWALPFGTRTPGEFPSWFDPSCLGDWTEAMGQGAPLDLENGPAKAGSDPVAVHSAWETASQLSFEEDGWTESEPRPVRREAHVRAKERH.

Positions 942 to 970 (QLSFEEDGWTESEPRPVRREAHVRAKERH) are disordered. Positions 953–970 (SEPRPVRREAHVRAKERH) are enriched in basic and acidic residues.

This is an uncharacterized protein from Frog virus 3 (isolate Goorha) (FV-3).